The sequence spans 446 residues: Probable rhamnogalacturonase A (446 aa).

Positions 1-18 (MPALPILALALAPLLVNG) are cleaved as a signal peptide. A disulfide bridge connects residues C39 and C65. N-linked (GlcNAc...) asparagine glycans are attached at residues N50, N115, and N124. The Proton donor role is filled by D216. Cysteines 218 and 235 form a disulfide. 2 N-linked (GlcNAc...) asparagine glycosylation sites follow: N236 and N281. H291 is a catalytic residue. N318 carries an N-linked (GlcNAc...) asparagine glycan. 2 disulfide bridges follow: C341–C347 and C369–C378.

The protein belongs to the glycosyl hydrolase 28 family.

It is found in the secreted. The enzyme catalyses Endohydrolysis of alpha-D-GalA-(1-&gt;2)-alpha-L-Rha glycosidic bond in the rhamnogalacturonan I backbone with initial inversion of anomeric configuration releasing oligosaccharides with beta-D-GalA at the reducing end.. Its function is as follows. Pectinolytic enzymes consist of four classes of enzymes: pectine lyase, polygalacturonase, pectin methylesterase and rhamnogalacturonase. Hydrolyzes alpha-D-galacturonopyranosyl-(1,2)-alpha-L-rhamnopyranosyl linkages in the backbone of the hairy regions of pectins. This chain is Probable rhamnogalacturonase A (rhgA), found in Aspergillus niger (strain ATCC MYA-4892 / CBS 513.88 / FGSC A1513).